Here is a 323-residue protein sequence, read N- to C-terminus: Phosphatidylethanolamine:ceramide ethanolaminephosphotransferase (323 aa).

At 1-26 the chain is on the cytoplasmic side; that stretch reads MAVPPVEMYSGSFWNRMRKPLPLRTQ. The chain crosses the membrane as a helical span at residues 27–47; sequence VIRFTVVFVIVSFILVVALQI. Residues 48–74 lie on the Extracellular side of the membrane; it reads THERMPDPKVTKPLPDLGFELLTKVPG. The helical transmembrane segment at 75 to 95 threads the bilayer; the sequence is MYVLADCCIGFLNILSVFTAF. Residues 96-147 are Cytoplasmic-facing; the sequence is KLYLLHRHCVGSGEPELPCNIPGVSRFFLSVWLCKENCRIELRNIHTIAWIR. A helical membrane pass occupies residues 148–168; that stretch reads FITSYALLLLSRSIIMVVTSL. At 169–187 the chain is on the extracellular side; it reads PNPDDLCQNPPKIENRVKD. A helical membrane pass occupies residues 188–208; the sequence is ILLTVLTAGAGSIHCGDLMYS. Topologically, residues 209–233 are cytoplasmic; that stretch reads GHTVILTLHLMFHWIYGAMVHWSFR. A helical transmembrane segment spans residues 234-254; the sequence is PVVTVVAIFGYYCIVASRFHY. Topologically, residues 255-257 are extracellular; sequence TDD. Residues 258 to 278 form a helical membrane-spanning segment; it reads VLVAIYLTIATFIAVGHNADG. Residues 279-323 lie on the Cytoplasmic side of the membrane; it reads APWQLQLFIRWWPCCGANSREVAEDGVPVAIVIKNEEMMNFEGKS.

It belongs to the sphingomyelin synthase family.

The protein resides in the membrane. The enzyme catalyses an N-acylsphing-4-enine + a 1,2-diacyl-sn-glycero-3-phosphoethanolamine = an N-acylsphing-4-enine 1-phosphoethanolamine + a 1,2-diacyl-sn-glycerol. It carries out the reaction an N-acylsphinganine + a 1,2-diacyl-sn-glycero-3-phosphoethanolamine = an N-acylsphinganine-1-phosphoethanolamine + a 1,2-diacyl-sn-glycerol. Predominantly synthesizes ethanolamine-phosphorylceramide (EPC), with minimal sphingomyelin (SM)/inositol phosphorylceramide (IPC) synthase activity. Specificity is likely to be defined by residues in the lumenal catalytic domain that interact with the polar head groups of the phospholipid donors. EPC is synthesized by both stages of the parasite life cycle, bloodstream forms (BSF) and procyclic forms (PCF), by transferring the phosphoethanolamine from a 1,2-diacyl-sn-glycero-3-phosphoethanolamine to an N-acylsphing-4-enine (ceramide) or an N-acylsphinganine (dihydroceramide). Similarly, SM is synthesized by transferring the phosphocholine from a 1,2-diacyl-sn-glycero-3-phosphocholine to ceramide or dihydroceramide by BSF and PCF, while IPC is confined to PCF. The ceramide/dihydroceramide ratios are skewed towards dihydroceramide in PCF parasites and ceramide in BSF parasites, this is likely due to differential expression and/or regulation of dihydroceramide desaturase, the enzyme responsible for converting dihydroceramide to ceramide. The sequence is that of Phosphatidylethanolamine:ceramide ethanolaminephosphotransferase from Trypanosoma brucei brucei.